The sequence spans 647 residues: Threonine--tRNA ligase (647 aa).

In terms of domain architecture, TGS spans 1–61; that stretch reads MINITFPDGA…TEDGSIEIVT (61 aa). The catalytic stretch occupies residues 242-540; the sequence is DHRKLGKELD…LIENYKGAFP (299 aa). Residues C336, H387, and H517 each coordinate Zn(2+).

This sequence belongs to the class-II aminoacyl-tRNA synthetase family. Homodimer. Zn(2+) is required as a cofactor.

It localises to the cytoplasm. The enzyme catalyses tRNA(Thr) + L-threonine + ATP = L-threonyl-tRNA(Thr) + AMP + diphosphate + H(+). In terms of biological role, catalyzes the attachment of threonine to tRNA(Thr) in a two-step reaction: L-threonine is first activated by ATP to form Thr-AMP and then transferred to the acceptor end of tRNA(Thr). Also edits incorrectly charged L-seryl-tRNA(Thr). The polypeptide is Threonine--tRNA ligase (Streptococcus pneumoniae (strain P1031)).